Reading from the N-terminus, the 360-residue chain is Histidinol-phosphate aminotransferase (360 aa).

Lys-221 bears the N6-(pyridoxal phosphate)lysine mark.

This sequence belongs to the class-II pyridoxal-phosphate-dependent aminotransferase family. Histidinol-phosphate aminotransferase subfamily. Homodimer. Requires pyridoxal 5'-phosphate as cofactor.

It carries out the reaction L-histidinol phosphate + 2-oxoglutarate = 3-(imidazol-4-yl)-2-oxopropyl phosphate + L-glutamate. Its pathway is amino-acid biosynthesis; L-histidine biosynthesis; L-histidine from 5-phospho-alpha-D-ribose 1-diphosphate: step 7/9. The polypeptide is Histidinol-phosphate aminotransferase (Desulfitobacterium hafniense (strain DSM 10664 / DCB-2)).